We begin with the raw amino-acid sequence, 1292 residues long: Sorbin and SH3 domain-containing protein 1 (1292 aa).

4 disordered regions span residues 1–29, 73–158, 214–275, and 318–381; these read MSSECDGGSKAVMNGLAPGSNGQDKATAD, LRAS…AQPE, HLQR…SSPL, and REQQ…MDEV. Residues 74–89 show a composition bias toward low complexity; the sequence is RASSSYRETPSSSPAS. T82 carries the post-translational modification Phosphothreonine. 2 positions are modified to phosphoserine: S86 and S89. Over residues 93 to 102 the composition is skewed to basic and acidic residues; that stretch reads TRQHESKPGL. 6 positions are modified to phosphoserine: E105, L114, V137, S146, S242, and S259. Positions 114–128 are enriched in polar residues; it reads LSSSADANGNAQPSS. Positions 240–252 are enriched in pro residues; it reads SFSPPPPLVPPAP. Residues 266–275 are compositionally biased toward polar residues; the sequence is AVSSTDSSPL. A Phosphoserine modification is found at S341. The residue at position 344 (T344) is a Phosphothreonine. Residues E346 and S350 each carry the phosphoserine modification. Positions 354 to 365 are enriched in basic and acidic residues; that stretch reads AIEKRAKDDSRR. The 104-residue stretch at 366 to 469 folds into the SoHo domain; it reads VVKSTQDLSD…YSPRYSFSED (104 aa). 3 positions are modified to phosphoserine: S369, S374, and N387. The interval 405–534 is disordered; it reads LNRDTPEENP…TRKYRAEPKS (130 aa). The span at 437–450 shows a compositional bias: polar residues; the sequence is YTPTYQFPASTPSP. S452, S465, D469, S472, R478, and S481 each carry phosphoserine. Residues 510–534 show a composition bias toward basic and acidic residues; the sequence is SSERNDWEPPDKKVDTRKYRAEPKS. Y536 is modified (phosphotyrosine; by ABL1). 4 positions are modified to phosphoserine: S556, N603, S609, and S640. Positions 628 to 650 are disordered; sequence APSANVPQSSAISPTPEISSETP. Y654 is subject to Phosphotyrosine; by ABL1. 2 positions are modified to phosphoserine: S665 and K700. The segment at 692-716 is disordered; the sequence is PLQGLSGLKRPSSSASTKDSESPRH. T708 is subject to Phosphothreonine. 4 positions are modified to phosphoserine: S713, I730, D735, and I765. In terms of domain architecture, SH3 1 spans 793–852; that stretch reads SEMRPARAKFDFKAQTLKELPLQKGDIVYIYKQIDQNWYEGEHHGRVGIFPRTYIELLPP. T862 carries the phosphothreonine modification. Residues 867-928 enclose the SH3 2 domain; that stretch reads LEYGEAIAKF…PITYVDVIKR (62 aa). The residue at position 923 (V923) is a Phosphoserine. Residue Y937 is modified to Phosphotyrosine. The span at 944–954 shows a compositional bias: low complexity; the sequence is SSPSRSATASP. Disordered stretches follow at residues 944–976, 1041–1064, 1106–1150, and 1162–1230; these read SSPSRSATASPQFSSHSKLITPAPSSLPHSRRA, SDRPTPRSVASPLALPSPHKTYSL, QLSD…KKSC, and TEQR…SQTS. 2 positions are modified to phosphoserine: S945 and S953. The span at 955–971 shows a compositional bias: polar residues; it reads QFSSHSKLITPAPSSLP. Residues 1106-1117 show a composition bias toward polar residues; the sequence is QLSDAFSSQSKR. The segment covering 1119 to 1136 has biased composition (basic and acidic residues); it reads PWREESGQYERKAERGAG. Over residues 1162–1172 the composition is skewed to polar residues; that stretch reads TEQRLSDLNTP. Basic and acidic residues predominate over residues 1192–1203; the sequence is QTERHRGGEQAG. A compositionally biased stretch (polar residues) spans 1211–1230; that stretch reads GSQQPQAQQRRVTPDRSQTS. Q1213 is subject to Phosphoserine. One can recognise an SH3 3 domain in the interval 1231–1292; the sequence is QDLFSYQALY…PGNYVKPLYL (62 aa). Y1240 is modified (phosphotyrosine; by ABL1).

Interacts (via third SH3 domain) with the Ten-1 ICD form of TENM1; the interaction induces the translocation of SORBS1 to the nucleus. Interacts with INSM1. Interacts with the long isoform of AFDN and with VCL. AFDN and VCL bind to SORBS1 in a competitive manner and do not form a ternary complex. Interacts with ABL1, CBL, CBLB and INPPL1/SHIP2 through the third SH3 domain. Interaction with ABL1 occurs only after insulin stimulation while this has no effect on the interaction with INPPL1. Interacts with the insulin receptor but dissociates from it following insulin stimulation. Also interacts with SCA7, PTK2/FAK1 and flotillin. Interacts (via SH3 domain 2) with PXN. Post-translationally, O-glycosylated. Detected in skeletal muscle (at protein level). Widely expressed with highest levels in heart and skeletal muscle.

The protein resides in the cell junction. Its subcellular location is the adherens junction. It is found in the cell membrane. It localises to the cytoplasm. The protein localises to the cytoskeleton. The protein resides in the focal adhesion. Its subcellular location is the nucleus. It is found in the nucleus matrix. Its function is as follows. Plays a role in tyrosine phosphorylation of CBL by linking CBL to the insulin receptor. Required for insulin-stimulated glucose transport. Involved in formation of actin stress fibers and focal adhesions. This Homo sapiens (Human) protein is Sorbin and SH3 domain-containing protein 1.